Here is a 197-residue protein sequence, read N- to C-terminus: Probable GTP-binding protein EngB (197 aa).

Residues 25–197 (SAPEIAFAGR…VRDEFFKFTR (173 aa)) form the EngB-type G domain. Residues 33–40 (GRSNVGKS), 60–64 (GCTRQ), 79–82 (DLPG), 146–149 (TKID), and 177–179 (MSI) each bind GTP. Positions 40 and 62 each coordinate Mg(2+).

Belongs to the TRAFAC class TrmE-Era-EngA-EngB-Septin-like GTPase superfamily. EngB GTPase family. It depends on Mg(2+) as a cofactor.

In terms of biological role, necessary for normal cell division and for the maintenance of normal septation. The sequence is that of Probable GTP-binding protein EngB from Wolbachia sp. subsp. Drosophila simulans (strain wRi).